The chain runs to 275 residues: Large ribosomal subunit protein uL2 (275 aa).

2 disordered regions span residues 35–55 (EKQT…RHKG) and 223–260 (VAMN…KTRN). A compositionally biased stretch (polar residues) spans 39-49 (RSSGRNNQGRV).

It belongs to the universal ribosomal protein uL2 family. As to quaternary structure, part of the 50S ribosomal subunit. Forms a bridge to the 30S subunit in the 70S ribosome.

One of the primary rRNA binding proteins. Required for association of the 30S and 50S subunits to form the 70S ribosome, for tRNA binding and peptide bond formation. It has been suggested to have peptidyltransferase activity; this is somewhat controversial. Makes several contacts with the 16S rRNA in the 70S ribosome. The polypeptide is Large ribosomal subunit protein uL2 (Methylococcus capsulatus (strain ATCC 33009 / NCIMB 11132 / Bath)).